A 361-amino-acid polypeptide reads, in one-letter code: Peptide chain release factor 1 (361 aa).

Position 235 is an N5-methylglutamine (Q235).

The protein belongs to the prokaryotic/mitochondrial release factor family. Methylated by PrmC. Methylation increases the termination efficiency of RF1.

The protein resides in the cytoplasm. Its function is as follows. Peptide chain release factor 1 directs the termination of translation in response to the peptide chain termination codons UAG and UAA. In Rhodopseudomonas palustris (strain BisB18), this protein is Peptide chain release factor 1.